We begin with the raw amino-acid sequence, 289 residues long: MKLRLGIPKGSLQEATIALFLRAGLTVHTSTRSYTATTDDAEVECMLIRAQEMARYVSKGVLDAGITGMDWVVESGLEVEAVSSLNYSKQSRGNVRWVLAVPEDSPYQRAEDLAGKVIATELVNVTSRYFAARGVPVKIEFSWGATEIKPPTLADAIVEVTETGSSLRANRLRIIDEVMPSSTQLIANVSAMQDDFKRKKVENLALMLEGAIAAQGRVGLMLNVRKGDLANALAVLPALNSPTISPLNDGEWVAVNTIIEETAAWTIIPRLKAANATGIVEYPLNKVVL.

Belongs to the ATP phosphoribosyltransferase family. Long subfamily. It depends on Mg(2+) as a cofactor.

Its subcellular location is the cytoplasm. The catalysed reaction is 1-(5-phospho-beta-D-ribosyl)-ATP + diphosphate = 5-phospho-alpha-D-ribose 1-diphosphate + ATP. It functions in the pathway amino-acid biosynthesis; L-histidine biosynthesis; L-histidine from 5-phospho-alpha-D-ribose 1-diphosphate: step 1/9. Its activity is regulated as follows. Feedback inhibited by histidine. Functionally, catalyzes the condensation of ATP and 5-phosphoribose 1-diphosphate to form N'-(5'-phosphoribosyl)-ATP (PR-ATP). Has a crucial role in the pathway because the rate of histidine biosynthesis seems to be controlled primarily by regulation of HisG enzymatic activity. In Koribacter versatilis (strain Ellin345), this protein is ATP phosphoribosyltransferase.